A 430-amino-acid polypeptide reads, in one-letter code: Enolase (430 aa).

Residue Gln163 coordinates (2R)-2-phosphoglycerate. The active-site Proton donor is the Glu205. Asp242, Glu287, and Asp314 together coordinate Mg(2+). 4 residues coordinate (2R)-2-phosphoglycerate: Lys339, Arg368, Ser369, and Lys390. The active-site Proton acceptor is the Lys339.

This sequence belongs to the enolase family. Requires Mg(2+) as cofactor.

It is found in the cytoplasm. It localises to the secreted. The protein resides in the cell surface. The enzyme catalyses (2R)-2-phosphoglycerate = phosphoenolpyruvate + H2O. It functions in the pathway carbohydrate degradation; glycolysis; pyruvate from D-glyceraldehyde 3-phosphate: step 4/5. In terms of biological role, catalyzes the reversible conversion of 2-phosphoglycerate (2-PG) into phosphoenolpyruvate (PEP). It is essential for the degradation of carbohydrates via glycolysis. The protein is Enolase of Bacillus cytotoxicus (strain DSM 22905 / CIP 110041 / 391-98 / NVH 391-98).